A 502-amino-acid polypeptide reads, in one-letter code: Lysine--tRNA ligase (502 aa).

Glu398 and Glu405 together coordinate Mg(2+).

It belongs to the class-II aminoacyl-tRNA synthetase family. As to quaternary structure, homodimer. Mg(2+) serves as cofactor.

It is found in the cytoplasm. It catalyses the reaction tRNA(Lys) + L-lysine + ATP = L-lysyl-tRNA(Lys) + AMP + diphosphate. The polypeptide is Lysine--tRNA ligase (Thermosipho melanesiensis (strain DSM 12029 / CIP 104789 / BI429)).